Consider the following 718-residue polypeptide: Exostosin-2 (718 aa).

Topologically, residues 1 to 25 (MCASVKYNIRGPALIPRMKTKHRIY) are cytoplasmic. A helical; Signal-anchor for type II membrane protein membrane pass occupies residues 26-46 (YITLFSIVLLGLIATGMFQFW). Residues 47 to 718 (PHSIESSGDW…LKSFPNIGSL (672 aa)) lie on the Lumenal side of the membrane. Cystine bridges form between Cys85–Cys90, Cys96–Cys151, Cys286–Cys300, and Cys318–Cys339. A glycan (N-linked (GlcNAc...) asparagine) is linked at Asn288. Leu461, Arg465, Asn490, and Asn517 together coordinate UDP. Residues Arg465, Asn490, Asn517, Arg522, Asp538, Asp539, and Asp540 each contribute to the UDP-N-acetyl-alpha-D-glucosamine site. UDP is bound by residues Asp538 and Asp539. Asp540 provides a ligand contact to Mn(2+). 2 residues coordinate a protein: Tyr582 and Ser584. Cys626 and Cys676 form a disulfide bridge. UDP-N-acetyl-alpha-D-glucosamine-binding residues include Glu627 and Asp628. Residue Asn637 is glycosylated (N-linked (GlcNAc...) asparagine). Positions 651 and 653 each coordinate a protein. Arg673 serves as a coordination point for UDP-N-acetyl-alpha-D-glucosamine.

It belongs to the glycosyltransferase 47 family. Part of the heparan sulfate polymerase, a dimeric complex composed of EXT1 and EXT2. Could also form homooligomeric complexes. Interacts with NDST1. Interacts with GALNT5. The cofactor is Mn(2+). In terms of processing, a soluble form is generated by proteolytic processing. N-glycosylated at Asn-637.

It localises to the golgi apparatus membrane. The protein localises to the golgi apparatus. The protein resides in the cis-Golgi network membrane. It is found in the endoplasmic reticulum membrane. Its subcellular location is the secreted. It carries out the reaction 3-O-{[(1-&gt;4)-beta-D-GlcA-(1-&gt;4)-alpha-D-GlcNAc](n)-(1-&gt;4)-beta-D-GlcA-(1-&gt;3)-beta-D-Gal-(1-&gt;3)-beta-D-Gal-(1-&gt;4)-beta-D-Xyl}-L-seryl-[protein] + UDP-N-acetyl-alpha-D-glucosamine = 3-O-{alpha-D-GlcNAc-[(1-&gt;4)-beta-D-GlcA-(1-&gt;4)-alpha-D-GlcNAc](n)-(1-&gt;4)-beta-D-GlcA-(1-&gt;3)-beta-D-Gal-(1-&gt;3)-beta-D-Gal-(1-&gt;4)-beta-D-Xyl}-L-seryl-[protein] + UDP + H(+). The protein operates within protein modification; protein glycosylation. Glycosyltransferase forming with EXT1 the heterodimeric heparan sulfate polymerase which catalyzes the elongation of the heparan sulfate glycan backbone. Glycan backbone extension consists in the alternating transfer of (1-&gt;4)-beta-D-GlcA and (1-&gt;4)-alpha-D-GlcNAc residues from their respective UDP-sugar donors. Both EXT1 and EXT2 are required for the full activity of the polymerase since EXT1 bears the N-acetylglucosaminyl-proteoglycan 4-beta-glucuronosyltransferase activity within the complex while EXT2 carries the glucuronosyl-N-acetylglucosaminyl-proteoglycan 4-alpha-N-acetylglucosaminyltransferase activity. Heparan sulfate proteoglycans are ubiquitous components of the extracellular matrix and play an important role in tissue homeostasis and signaling. This Bos taurus (Bovine) protein is Exostosin-2.